The sequence spans 116 residues: MMEEIDNNELKFRMITPDGESFLVNSAPIEGWQNDIWKTFDEQKRVFDAEIKKAFEHCNVPLEETIERAELVVDKDDNTVLTIDKLPVLILYKPEFLYSKGKAVQRYKRLYEEDVE.

The protein is SPbeta prophage-derived uncharacterized protein YoqA (yoqA) of Bacillus subtilis (strain 168).